Reading from the N-terminus, the 20-residue chain is Cytochrome P450 2A7 (20 aa).

Belongs to the cytochrome P450 family. It depends on heme as a cofactor.

The protein resides in the endoplasmic reticulum membrane. Its subcellular location is the microsome membrane. The enzyme catalyses an organic molecule + reduced [NADPH--hemoprotein reductase] + O2 = an alcohol + oxidized [NADPH--hemoprotein reductase] + H2O + H(+). Functionally, exhibits a high coumarin 7-hydroxylase activity. The chain is Cytochrome P450 2A7 (CYP2A7) from Papio sp. (Baboon).